The sequence spans 155 residues: Transcriptional repressor NrdR (155 aa).

Residues 3-34 fold into a zinc finger; it reads CPFCGNIDTQVKDSRPAEDHVSIRRRRFCPAC. Positions 49 to 139 constitute an ATP-cone domain; the sequence is LVVIKSTGKR…VYKNFQAADD (91 aa).

This sequence belongs to the NrdR family. It depends on Zn(2+) as a cofactor.

Its function is as follows. Negatively regulates transcription of bacterial ribonucleotide reductase nrd genes and operons by binding to NrdR-boxes. This Roseobacter denitrificans (strain ATCC 33942 / OCh 114) (Erythrobacter sp. (strain OCh 114)) protein is Transcriptional repressor NrdR.